Consider the following 224-residue polypeptide: 7-cyano-7-deazaguanine synthase (224 aa).

9–19 (ISGGMDSTLCA) contacts ATP. Cys190, Cys198, Cys201, and Cys204 together coordinate Zn(2+).

It belongs to the QueC family. It depends on Zn(2+) as a cofactor.

The catalysed reaction is 7-carboxy-7-deazaguanine + NH4(+) + ATP = 7-cyano-7-deazaguanine + ADP + phosphate + H2O + H(+). It participates in purine metabolism; 7-cyano-7-deazaguanine biosynthesis. Its function is as follows. Catalyzes the ATP-dependent conversion of 7-carboxy-7-deazaguanine (CDG) to 7-cyano-7-deazaguanine (preQ(0)). This chain is 7-cyano-7-deazaguanine synthase, found in Campylobacter jejuni subsp. doylei (strain ATCC BAA-1458 / RM4099 / 269.97).